A 247-amino-acid chain; its full sequence is Fasciclin-like arabinogalactan protein 6 (247 aa).

The signal sequence occupies residues 1-23 (MSSSLFSYVVLLIFLFTIPYIQS). In terms of domain architecture, FAS1 spans 36–182 (PINLTAILEA…LAVYVVDSVL (147 aa)). Residues N38, N57, N70, N142, and N153 are each glycosylated (N-linked (GlcNAc...) asparagine). Residues 192–212 (TTPTGAPAPKSSTSSSDADSP) are compositionally biased toward low complexity. Residues 192–221 (TTPTGAPAPKSSTSSSDADSPAADDEHKSA) are disordered. G222 carries GPI-anchor amidated glycine lipidation. Residues 223–247 (SSVKRTSLGIVVSFALFCCSVIYIA) constitute a propeptide, removed in mature form.

This sequence belongs to the fasciclin-like AGP family.

It localises to the cell membrane. Its function is as follows. May be a cell surface adhesion protein. The chain is Fasciclin-like arabinogalactan protein 6 (FLA6) from Arabidopsis thaliana (Mouse-ear cress).